The chain runs to 47 residues: Large ribosomal subunit protein bL33 (47 aa).

The protein belongs to the bacterial ribosomal protein bL33 family.

The polypeptide is Large ribosomal subunit protein bL33 (Staphylococcus saprophyticus).